Reading from the N-terminus, the 74-residue chain is Kappa-scoloptoxin(07)-Ssm2d (74 aa).

Residues 1-19 (MLVFYALLFVTVFSNTVMG) form the signal peptide. Positions 20-41 (ATIDKPIPKPILREAIEEIEVN) are excised as a propeptide.

Belongs to the scoloptoxin-07 family. Post-translationally, contains 3 disulfide bonds. In terms of tissue distribution, expressed by the venom gland.

The protein resides in the secreted. In terms of biological role, inhibits voltage-gated potassium channels. The chain is Kappa-scoloptoxin(07)-Ssm2d from Scolopendra mutilans (Chinese red-headed centipede).